Here is an 88-residue protein sequence, read N- to C-terminus: Small ribosomal subunit protein uS15 (88 aa).

This sequence belongs to the universal ribosomal protein uS15 family. As to quaternary structure, part of the 30S ribosomal subunit. Forms a bridge to the 50S subunit in the 70S ribosome, contacting the 23S rRNA.

One of the primary rRNA binding proteins, it binds directly to 16S rRNA where it helps nucleate assembly of the platform of the 30S subunit by binding and bridging several RNA helices of the 16S rRNA. Its function is as follows. Forms an intersubunit bridge (bridge B4) with the 23S rRNA of the 50S subunit in the ribosome. The polypeptide is Small ribosomal subunit protein uS15 (Psychrobacter cryohalolentis (strain ATCC BAA-1226 / DSM 17306 / VKM B-2378 / K5)).